The chain runs to 328 residues: Malate dehydrogenase (328 aa).

Residue 12 to 18 (GAAGQIG) participates in NAD(+) binding. 2 residues coordinate substrate: Arg95 and Arg101. Residues Asn108, Gln115, and 132–134 (VGN) contribute to the NAD(+) site. Positions 134 and 165 each coordinate substrate. The active-site Proton acceptor is the His190.

The protein belongs to the LDH/MDH superfamily. MDH type 2 family.

It carries out the reaction (S)-malate + NAD(+) = oxaloacetate + NADH + H(+). In terms of biological role, catalyzes the reversible oxidation of malate to oxaloacetate. The chain is Malate dehydrogenase from Methylibium petroleiphilum (strain ATCC BAA-1232 / LMG 22953 / PM1).